The following is a 281-amino-acid chain: Diaminopimelate epimerase (281 aa).

The substrate site is built by Asn13 and Asn66. The Proton donor role is filled by Cys75. Substrate-binding positions include 76-77, Asn164, Asn197, and 215-216; these read GN and ER. Cys224 acts as the Proton acceptor in catalysis. Residue 225 to 226 coordinates substrate; it reads GT.

This sequence belongs to the diaminopimelate epimerase family. In terms of assembly, homodimer.

The protein resides in the cytoplasm. It carries out the reaction (2S,6S)-2,6-diaminopimelate = meso-2,6-diaminopimelate. It functions in the pathway amino-acid biosynthesis; L-lysine biosynthesis via DAP pathway; DL-2,6-diaminopimelate from LL-2,6-diaminopimelate: step 1/1. Catalyzes the stereoinversion of LL-2,6-diaminopimelate (L,L-DAP) to meso-diaminopimelate (meso-DAP), a precursor of L-lysine and an essential component of the bacterial peptidoglycan. The chain is Diaminopimelate epimerase from Picosynechococcus sp. (strain ATCC 27264 / PCC 7002 / PR-6) (Agmenellum quadruplicatum).